A 194-amino-acid polypeptide reads, in one-letter code: RNA polymerase II subunit A C-terminal domain phosphatase SSU72 like protein 6 (194 aa).

This sequence belongs to the SSU72 phosphatase family.

The protein localises to the nucleus. The catalysed reaction is O-phospho-L-seryl-[protein] + H2O = L-seryl-[protein] + phosphate. The enzyme catalyses O-phospho-L-threonyl-[protein] + H2O = L-threonyl-[protein] + phosphate. Functionally, protein phosphatase that catalyzes the dephosphorylation of the C-terminal domain of RNA polymerase II. Plays a role in RNA processing and termination. This Homo sapiens (Human) protein is RNA polymerase II subunit A C-terminal domain phosphatase SSU72 like protein 6.